A 282-amino-acid polypeptide reads, in one-letter code: Small-conductance mechanosensitive channel (282 aa).

At 1-23 (MWADIYHKLVEIYDIKAVKFLLD) the chain is on the periplasmic side. A helical transmembrane segment spans residues 24–46 (VLKILIIAFIGIKFADFLIYRFY). The Cytoplasmic segment spans residues 47–66 (KLYSKSKIQLPQRKIDTLTS). The helical transmembrane segment at 67–87 (LTKNAVRYIIYFLAGASILKL) threads the bilayer. The Periplasmic portion of the chain corresponds to 88–89 (FN). The chain crosses the membrane as a helical span at residues 90–110 (IDMTSLLAVAGIGSLAIGFGA). Residues 111-282 (QNLVKDMISG…TVILSEKKTN (172 aa)) lie on the Cytoplasmic side of the membrane.

The protein belongs to the MscS (TC 1.A.23) family. In terms of assembly, homoheptamer.

The protein resides in the cell inner membrane. Its function is as follows. Mechanosensitive ion channel that participates in the regulation of osmotic pressure changes within the cell, opening in response to stretch forces in the membrane lipid bilayer, without the need for other proteins. Has high selectivity for anions, and may contribute to resistance to hypoosmotic shock. The protein is Small-conductance mechanosensitive channel of Caldanaerobacter subterraneus subsp. tengcongensis (strain DSM 15242 / JCM 11007 / NBRC 100824 / MB4) (Thermoanaerobacter tengcongensis).